Reading from the N-terminus, the 116-residue chain is Ribosome-binding factor A (116 aa).

The protein belongs to the RbfA family. In terms of assembly, monomer. Binds 30S ribosomal subunits, but not 50S ribosomal subunits or 70S ribosomes.

The protein localises to the cytoplasm. Functionally, one of several proteins that assist in the late maturation steps of the functional core of the 30S ribosomal subunit. Associates with free 30S ribosomal subunits (but not with 30S subunits that are part of 70S ribosomes or polysomes). Required for efficient processing of 16S rRNA. May interact with the 5'-terminal helix region of 16S rRNA. The polypeptide is Ribosome-binding factor A (Streptococcus uberis (strain ATCC BAA-854 / 0140J)).